Reading from the N-terminus, the 577-residue chain is Moesin (577 aa).

The FERM domain occupies 2 to 295; it reads PKTINVRVTT…GNHELYMRRR (294 aa). Phosphoserine is present on S74. K79 carries the post-translational modification N6-acetyllysine. Residue K83 is modified to N6-succinyllysine. The [IL]-x-C-x-x-[DE] motif signature appears at 115–120; it reads IYCPPE. Y116 carries the phosphotyrosine modification. Residue C117 is modified to S-nitrosocysteine. 2 positions are modified to N6-acetyllysine: K139 and K165. A compositionally biased stretch (basic and acidic residues) spans 376 to 414; it reads EQERKRAQSEAEKLAKERQEAEEAKEALLKASRDQKKTQ. Disordered regions lie at residues 376-415 and 434-518; these read EQERKRAQSEAEKLAKERQEAEEAKEALLKASRDQKKTQE and ARQK…NERV. S407 is modified (phosphoserine). Residues 476–487 show a composition bias toward acidic residues; it reads AENDQDEQDENG. The segment covering 492 to 518 has biased composition (basic and acidic residues); the sequence is ADLRADAMAKDRSEEERTTEAEKNERV. S527 carries the post-translational modification Phosphoserine. Position 558 is a phosphothreonine; by ROCK2 and STK10 (T558).

Binds NHERF1. In resting T-cells, part of a PAG1-NHERF1-MSN complex which is disrupted upon TCR activation. Interacts with PPP1R16B. Interacts with PDZD8. Interacts with SELPLG and SYK; mediates the activation of SYK by SELPLG. Interacts with PDPN (via cytoplasmic domain); activates RHOA and promotes epithelial-mesenchymal transition. Interacts with SPN/CD43 cytoplasmic tail, CD44 and ICAM2. In terms of processing, phosphorylation on Thr-558 is crucial for the formation of microvilli-like structures. Phosphorylation by ROCK2 suppresses the head-to-tail association of the N-terminal and C-terminal halves resulting in an opened conformation which is capable of actin and membrane-binding. Phosphorylation on Thr-558 by STK10 negatively regulates lymphocyte migration and polarization. S-nitrosylation of Cys-117 is induced by interferon-gamma and oxidatively-modified low-densitity lipoprotein (LDL(ox)) implicating the iNOS-S100A8/9 transnitrosylase complex.

It localises to the cell membrane. The protein localises to the cytoplasm. Its subcellular location is the cytoskeleton. The protein resides in the apical cell membrane. It is found in the cell projection. It localises to the microvillus membrane. The protein localises to the microvillus. Its activity is regulated as follows. A head-to-tail association, of the N-terminal and C-terminal halves results in a closed conformation (inactive form) which is incapable of actin or membrane-binding. In terms of biological role, probably involved in connections of major cytoskeletal structures to the plasma membrane. Plays a role in regulating the proliferation, migration, and adhesion of human lymphoid cells and participates in immunologic synapse formation. The chain is Moesin from Sus scrofa (Pig).